The primary structure comprises 277 residues: Thymidylate synthase (277 aa).

Residues arginine 27 and 132 to 133 contribute to the dUMP site; that span reads RR. Cysteine 152 serves as the catalytic Nucleophile. Residues 179–182, asparagine 190, and 220–222 each bind dUMP; these read RSAD and HVY. Position 182 (aspartate 182) interacts with (6R)-5,10-methylene-5,6,7,8-tetrahydrofolate. Alanine 276 provides a ligand contact to (6R)-5,10-methylene-5,6,7,8-tetrahydrofolate.

The protein belongs to the thymidylate synthase family. Bacterial-type ThyA subfamily. Homodimer.

The protein localises to the cytoplasm. The enzyme catalyses dUMP + (6R)-5,10-methylene-5,6,7,8-tetrahydrofolate = 7,8-dihydrofolate + dTMP. It functions in the pathway pyrimidine metabolism; dTTP biosynthesis. Its function is as follows. Catalyzes the reductive methylation of 2'-deoxyuridine-5'-monophosphate (dUMP) to 2'-deoxythymidine-5'-monophosphate (dTMP) while utilizing 5,10-methylenetetrahydrofolate (mTHF) as the methyl donor and reductant in the reaction, yielding dihydrofolate (DHF) as a by-product. This enzymatic reaction provides an intracellular de novo source of dTMP, an essential precursor for DNA biosynthesis. The protein is Thymidylate synthase of Albidiferax ferrireducens (strain ATCC BAA-621 / DSM 15236 / T118) (Rhodoferax ferrireducens).